A 211-amino-acid chain; its full sequence is Small ribosomal subunit protein uS3 (211 aa).

In terms of domain architecture, KH type-2 spans 38-106; that stretch reads LRNFLKKRLY…EIYLNIQEVR (69 aa).

This sequence belongs to the universal ribosomal protein uS3 family. Part of the 30S ribosomal subunit. Forms a tight complex with proteins S10 and S14.

Its function is as follows. Binds the lower part of the 30S subunit head. Binds mRNA in the 70S ribosome, positioning it for translation. This Geobacter sulfurreducens (strain ATCC 51573 / DSM 12127 / PCA) protein is Small ribosomal subunit protein uS3.